The sequence spans 401 residues: Probable cysteine desulfurase (401 aa).

At Lys223 the chain carries N6-(pyridoxal phosphate)lysine.

This sequence belongs to the class-V pyridoxal-phosphate-dependent aminotransferase family. Csd subfamily. Pyridoxal 5'-phosphate is required as a cofactor.

The enzyme catalyses (sulfur carrier)-H + L-cysteine = (sulfur carrier)-SH + L-alanine. Its function is as follows. Catalyzes the removal of elemental sulfur and selenium atoms from L-cysteine, L-cystine, L-selenocysteine, and L-selenocystine to produce L-alanine. The polypeptide is Probable cysteine desulfurase (csdA) (Pseudomonas putida (strain ATCC 47054 / DSM 6125 / CFBP 8728 / NCIMB 11950 / KT2440)).